The sequence spans 311 residues: Zeta-sarcoglycan (311 aa).

At 1 to 50 (MDRSTDLDIQELKMTREQYILATQQNNLPRPENAQLYPVGIYGWRKRCLY) the chain is on the cytoplasmic side. Residues 51–71 (FFVLLLLVTMIVNLAMTIWIL) form a helical; Signal-anchor for type II membrane protein membrane-spanning segment. Residues 72-311 (KVMNFTVDGM…QSSSSICLWN (240 aa)) are Extracellular-facing. N75 and N123 each carry an N-linked (GlcNAc...) asparagine glycan. The cysteines at positions 285 and 301 are disulfide-linked.

Belongs to the sarcoglycan beta/delta/gamma/zeta family. As to expression, expressed in the heart, skeletal muscle and arterial vascular smooth muscle.

The protein resides in the cell membrane. It is found in the sarcolemma. It localises to the cytoplasm. Its subcellular location is the cytoskeleton. Functionally, component of the sarcoglycan complex, a subcomplex of the dystrophin-glycoprotein complex which forms a link between the F-actin cytoskeleton and the extracellular matrix. May play a role in the maintenance of striated muscle membrane stability. This chain is Zeta-sarcoglycan (Sgcz), found in Mus musculus (Mouse).